We begin with the raw amino-acid sequence, 192 residues long: Peroxiredoxin tpx1 (192 aa).

Residues Leu3 to Phe161 enclose the Thioredoxin domain. The active-site Cysteine sulfenic acid (-SOH) intermediate is Cys48. Phosphoserine occurs at positions 105 and 148.

Belongs to the peroxiredoxin family. AhpC/Prx1 subfamily. In terms of assembly, homodimer; disulfide-linked, upon oxidation. Interacts with srx1 in response to oxidative stress. Interacts with pap1 via transient disulfide linkages. Post-translationally, the enzyme can be inactivated by further oxidation of the cysteine sulfenic acid (C(P)-SOH) to sulphinic acid (C(P)-SO2H) instead of its condensation to a disulfide bond. It can be reactivated by forming a transient disulfide bond with sulfiredoxin srx1, which reduces the cysteine sulfinic acid in an ATP- and Mg-dependent manner.

The protein resides in the cytoplasm. It localises to the nucleus. It carries out the reaction a hydroperoxide + [thioredoxin]-dithiol = an alcohol + [thioredoxin]-disulfide + H2O. In terms of biological role, thiol-specific peroxidase that catalyzes the reduction of hydrogen peroxide and organic hydroperoxides to water and alcohols, respectively. Plays a role in cell protection against oxidative stress by detoxifying peroxides and as sensor of hydrogen peroxide-mediated signaling events. Relays hydrogen peroxide as a signal to the transcription factor pap1 by inducing the formation of intramolecular disulfide bonds in pap1, which causes its nuclear accumulation and activation. Reduced by srx1 and this regulation acts as a molecular switch controlling the transcriptional response to hydrogen peroxide. The sequence is that of Peroxiredoxin tpx1 (tpx1) from Schizosaccharomyces pombe (strain 972 / ATCC 24843) (Fission yeast).